The chain runs to 174 residues: NADH-quinone oxidoreductase subunit I (174 aa).

4Fe-4S ferredoxin-type domains follow at residues 61-91 and 103-132; these read LTVK…ITAA and ISYE…LGPE. 8 residues coordinate [4Fe-4S] cluster: C71, C74, C77, C81, C112, C115, C118, and C122.

This sequence belongs to the complex I 23 kDa subunit family. As to quaternary structure, NDH-1 is composed of 14 different subunits. Subunits NuoA, H, J, K, L, M, N constitute the membrane sector of the complex. [4Fe-4S] cluster is required as a cofactor.

It localises to the cell inner membrane. It catalyses the reaction a quinone + NADH + 5 H(+)(in) = a quinol + NAD(+) + 4 H(+)(out). In terms of biological role, NDH-1 shuttles electrons from NADH, via FMN and iron-sulfur (Fe-S) centers, to quinones in the respiratory chain. The immediate electron acceptor for the enzyme in this species is believed to be ubiquinone. Couples the redox reaction to proton translocation (for every two electrons transferred, four hydrogen ions are translocated across the cytoplasmic membrane), and thus conserves the redox energy in a proton gradient. The chain is NADH-quinone oxidoreductase subunit I from Bdellovibrio bacteriovorus (strain ATCC 15356 / DSM 50701 / NCIMB 9529 / HD100).